Consider the following 511-residue polypeptide: Adenosine deaminase 2 (511 aa).

The signal sequence occupies residues 1-29; the sequence is MLVDGPSERPALCFLLLAVAMSFFGSALS. The tract at residues 30 to 100 is dimerization; the sequence is IDETRAHLLL…HLIERSQVFN (71 aa). Residues His112 and His114 each contribute to the Zn(2+) site. Asp115 is a binding site for substrate. N-linked (GlcNAc...) asparagine glycosylation occurs at Asn127. A PRB domain region spans residues 127–185; it reads NVTYRPHCHICFTPRGIMQFRFAHPTPRPSEKCSKWILLEDYRKRVQNVTEFDDSLLRN. Cys137 and Cys159 form a disulfide bridge. 2 N-linked (GlcNAc...) asparagine glycosylation sites follow: Asn174 and Asn185. Residues 204-211, His293, and Gly326 contribute to the substrate site; that span reads WSKFETIF. A Zn(2+)-binding site is contributed by His356. Glu359 serves as the catalytic Proton donor. N-linked (GlcNAc...) asparagine glycosylation is present at Asn378. Residue His384 is the Proton acceptor of the active site. Asp441 contributes to the Zn(2+) binding site. Residue Asp442 coordinates substrate.

It belongs to the metallo-dependent hydrolases superfamily. Adenosine and AMP deaminases family. ADGF subfamily. In terms of assembly, homodimer. Interacts with adenosine receptors. Binds heparin. Zn(2+) is required as a cofactor. As to expression, detected in blood plasma (at protein level). Widely expressed, with most abundant expression in human adult heart, lung, lymphoblasts, and placenta as well as fetal lung, liver, and kidney. In embryo, expressed in the outflow tract and atrium of the developing heart, the VII/VIII cranial nerve ganglion, and the notochord.

It localises to the secreted. It carries out the reaction adenosine + H2O + H(+) = inosine + NH4(+). Functionally, adenosine deaminase that may contribute to the degradation of extracellular adenosine, a signaling molecule that controls a variety of cellular responses. Requires elevated adenosine levels for optimal enzyme activity. Binds to cell surfaces via proteoglycans and may play a role in the regulation of cell proliferation and differentiation, independently of its enzyme activity. This Homo sapiens (Human) protein is Adenosine deaminase 2.